The chain runs to 1205 residues: Caskin-2 (1205 aa).

ANK repeat units follow at residues Asp-48 to Ile-77, Asn-81 to Ala-110, Asp-114 to His-143, Gly-147 to Leu-176, Asn-188 to Lys-217, and Lys-220 to Ile-249. The SH3 domain occupies Ser-281 to Lys-347. 2 stretches are compositionally biased toward polar residues: residues Ser-377–Thr-388 and Gly-398–Ser-411. The tract at residues Ser-377–Ser-411 is disordered. SAM domains lie at Lys-468–Ala-531 and Gln-537–Leu-601. The segment covering Arg-666–Ser-687 has biased composition (low complexity). 4 disordered regions span residues Arg-666–Ser-689, Arg-784–Leu-964, Gln-984–Pro-1054, and Ser-1132–Pro-1155. The span at Ser-823–Lys-840 shows a compositional bias: polar residues. Over residues Ile-908–Pro-919 the composition is skewed to low complexity. A compositionally biased stretch (polar residues) spans Asp-942–Glu-959. Over residues Lys-1009–Pro-1037 the composition is skewed to basic and acidic residues. 2 stretches are compositionally biased toward polar residues: residues Ala-1042–Pro-1054 and Arg-1137–Pro-1155.

This Xenopus laevis (African clawed frog) protein is Caskin-2 (caskin2).